Reading from the N-terminus, the 185-residue chain is Dual-action ribosomal maturation protein DarP (185 aa).

This sequence belongs to the DarP family.

The protein resides in the cytoplasm. Member of a network of 50S ribosomal subunit biogenesis factors which assembles along the 30S-50S interface, preventing incorrect 23S rRNA structures from forming. Promotes peptidyl transferase center (PTC) maturation. This is Dual-action ribosomal maturation protein DarP from Vibrio vulnificus (strain YJ016).